Reading from the N-terminus, the 422-residue chain is Adenylosuccinate synthetase (422 aa).

GTP contacts are provided by residues 11–17 (GDEGKGK) and 39–41 (GHT). The Proton acceptor role is filled by Asp-12. Mg(2+) is bound by residues Asp-12 and Gly-39. IMP contacts are provided by residues 12–15 (DEGK), 37–40 (NAGH), Thr-129, Arg-143, Asn-220, Thr-235, and Arg-299. His-40 serves as the catalytic Proton donor. 295–301 (VTTGRKR) contributes to the substrate binding site. GTP contacts are provided by residues Arg-301, 327 to 329 (KLD), and 410 to 412 (GTG).

Belongs to the adenylosuccinate synthetase family. In terms of assembly, homodimer. The cofactor is Mg(2+).

It localises to the cytoplasm. It catalyses the reaction IMP + L-aspartate + GTP = N(6)-(1,2-dicarboxyethyl)-AMP + GDP + phosphate + 2 H(+). Its pathway is purine metabolism; AMP biosynthesis via de novo pathway; AMP from IMP: step 1/2. Its function is as follows. Plays an important role in the de novo pathway and in the salvage pathway of purine nucleotide biosynthesis. Catalyzes the first committed step in the biosynthesis of AMP from IMP. The protein is Adenylosuccinate synthetase of Arthroderma otae (strain ATCC MYA-4605 / CBS 113480) (Microsporum canis).